A 179-amino-acid chain; its full sequence is Large ribosomal subunit protein uL5 (179 aa).

The protein belongs to the universal ribosomal protein uL5 family. In terms of assembly, part of the 50S ribosomal subunit; part of the 5S rRNA/L5/L18/L25 subcomplex. Contacts the 5S rRNA and the P site tRNA. Forms a bridge to the 30S subunit in the 70S ribosome.

This is one of the proteins that bind and probably mediate the attachment of the 5S RNA into the large ribosomal subunit, where it forms part of the central protuberance. In the 70S ribosome it contacts protein S13 of the 30S subunit (bridge B1b), connecting the 2 subunits; this bridge is implicated in subunit movement. Contacts the P site tRNA; the 5S rRNA and some of its associated proteins might help stabilize positioning of ribosome-bound tRNAs. In Pseudomonas fluorescens (strain SBW25), this protein is Large ribosomal subunit protein uL5.